The primary structure comprises 341 residues: Probable alcohol acetyltransferase (341 aa).

Residues 1–40 (MFASRILRNSAQTLKTELPHKETIKMAYDLHKPRSTAIRH) constitute a mitochondrion transit peptide. Positions 48–301 (PILFLHGIFG…NSNHDILDQR (254 aa)) constitute an AB hydrolase-1 domain. Catalysis depends on charge relay system residues serine 121, aspartate 145, and histidine 295.

The protein belongs to the AB hydrolase superfamily.

It is found in the mitochondrion. In terms of biological role, probable alcohol acetyltransferase that uses acetyl-CoA to synthesize acetate esters from various alcohols. Not involved in the synthesis of ethyl acetate. This Wickerhamomyces anomalus (strain ATCC 58044 / CBS 1984 / NCYC 433 / NRRL Y-366-8) (Yeast) protein is Probable alcohol acetyltransferase (EAT2).